Here is a 296-residue protein sequence, read N- to C-terminus: MSNTPFRTGFVAVVGRPNVGKSTLTNALIGSKISIVSRKAQTTRHRIHGVLTREHEQFVFVDTPGFQTRHGGAMNRMMNRVVTQALAEVDVVVHVVEAGKWTDGDAKLLPLLPDARRTILVVSKIDAVKRRDELFAFVSKIVAQHPYDAVVPVSAVKSQQLDQLLDEIAARLPEGEPLFEEDTLTDRPMRFIAAELLREKIFRLVGDELPYGCTVVIEQWEETDKNLRVAACVVVERDSHRPILLGAGGVHMKRIATEARQDIAKLVDKPVHLEVYIKVRKGWSDRESALRDLGYE.

In terms of domain architecture, Era-type G spans 7–174 (RTGFVAVVGR…LDEIAARLPE (168 aa)). The segment at 15–22 (GRPNVGKS) is G1. 15–22 (GRPNVGKS) provides a ligand contact to GTP. A G2 region spans residues 41 to 45 (QTTRH). Residues 62–65 (DTPG) form a G3 region. GTP contacts are provided by residues 62 to 66 (DTPGF) and 123 to 126 (SKID). The G4 stretch occupies residues 123–126 (SKID). The segment at 153 to 155 (VSA) is G5. One can recognise a KH type-2 domain in the interval 205–281 (VGDELPYGCT…HLEVYIKVRK (77 aa)).

This sequence belongs to the TRAFAC class TrmE-Era-EngA-EngB-Septin-like GTPase superfamily. Era GTPase family. Monomer.

The protein resides in the cytoplasm. The protein localises to the cell inner membrane. In terms of biological role, an essential GTPase that binds both GDP and GTP, with rapid nucleotide exchange. Plays a role in 16S rRNA processing and 30S ribosomal subunit biogenesis and possibly also in cell cycle regulation and energy metabolism. In Bordetella petrii (strain ATCC BAA-461 / DSM 12804 / CCUG 43448), this protein is GTPase Era.